Reading from the N-terminus, the 285-residue chain is Sulfotransferase 2A6 (285 aa).

44 to 49 (KSGTNW) contacts 3'-phosphoadenylyl sulfate. The active-site Proton acceptor is the H99. 3'-phosphoadenylyl sulfate is bound by residues R121, S129, Y184, 218 to 223 (SSFQAM), and 247 to 249 (RKG).

The protein belongs to the sulfotransferase 1 family. Oligomer.

It is found in the cytoplasm. The protein resides in the cytosol. The catalysed reaction is an alcohol + 3'-phosphoadenylyl sulfate = an alkyl sulfate + adenosine 3',5'-bisphosphate + H(+). It catalyses the reaction glycolithocholate + 3'-phosphoadenylyl sulfate = sulfoglycolithocholate + adenosine 3',5'-bisphosphate + H(+). The enzyme catalyses taurolithocholate + 3'-phosphoadenylyl sulfate = taurolithocholate 3-sulfate + adenosine 3',5'-bisphosphate + H(+). It carries out the reaction 3beta-hydroxyandrost-5-en-17-one + 3'-phosphoadenylyl sulfate = dehydroepiandrosterone 3-sulfate + adenosine 3',5'-bisphosphate + H(+). Functionally, sulfotransferase that utilizes 3'-phospho-5'-adenylyl sulfate (PAPS) as sulfonate donor to catalyze the sulfonation of the hydroxyl group of hydroxysteroids and bile acids. The protein is Sulfotransferase 2A6 of Mus musculus (Mouse).